A 659-amino-acid chain; its full sequence is MSNQAQDQPERRDSSSENSSPFKDDEVAADQSVSAHGNTSLNKKDRVSAVRDADASSAREGQQPGVTRIEALYRIFPRNSPIVYTVYASLAAVTICFALDQSTTAAYQLYATRTLGSHAKLFGVIATVEAILNAVSKPFIAKICDIFSRQTAYFLVAVFYTIGFVVVASAQTPAAFAVGRIITEVGQAGFDLVTDIVVADLSPLEWRGVVTALTSSPFIVLPWVGNLIQARLNTGRPEGWRWGYGMFAIMAPVCVAPIILVLMYVDRKAQKAGELSFASSRLETRRAQEQGTVKVQRDSLRDRFANLVQLCKEMDLVGLFLLALSFSLLLVPFSIYKDADKQWRNPSIIAMFVCGGVILGMFLAWEILLASHPVMNKRVWYNRTFLLAVTIDIFYFMGGNARSTYYGSFVLVGTNLSTANWGYVVNALATCALSVFGLAAGFYLRIFHRYKFLQIGGLVIRIVAMGLYLYGRNGNLTTMVVAWSQILNSLGGACSVVGTRVASQASVPHQDLASIISQLALWTRLGGAIGSAIAAGIWTGTLPDYLAATNLTPAQQSRAYNSPTTIKTSYPWNTPLRNQINQAFSKTMKPIFIVALVLAFIPLFAGLLMPNYYLGKTQNAVDGTDNSGRVIESAEDNPNAEINRKNVKYAKGTRLSWLW.

Residues 1-62 (MSNQAQDQPE…ADASSAREGQ (62 aa)) are disordered. Polar residues predominate over residues 31 to 41 (QSVSAHGNTSL). Asn38 carries N-linked (GlcNAc...) asparagine glycosylation. Basic and acidic residues predominate over residues 42-54 (NKKDRVSAVRDAD). The next 8 membrane-spanning stretches (helical) occupy residues 79 to 99 (NSPI…CFAL), 121 to 141 (LFGV…PFIA), 150 to 170 (QTAY…VASA), 208 to 228 (GVVT…GNLI), 245 to 265 (GMFA…LMYV), 316 to 336 (LVGL…FSIY), 348 to 368 (IIAM…WEIL), and 379 to 399 (VWYN…FMGG). An N-linked (GlcNAc...) asparagine glycan is attached at Asn415. The next 2 membrane-spanning stretches (helical) occupy residues 424 to 444 (VVNA…GFYL) and 451 to 471 (KFLQ…YLYG). Asn475 carries N-linked (GlcNAc...) asparagine glycosylation. The next 3 helical transmembrane spans lie at 478–498 (TMVV…SVVG), 528–548 (AIGS…YLAA), and 590–610 (PIFI…LLMP).

Belongs to the major facilitator superfamily.

The protein resides in the membrane. Its function is as follows. Siderophore transporter; part of the gene cluster that mediates the biosynthesis of siderophore ferrichrome A which is contributing to organismal virulence. This Mycosarcoma maydis (Corn smut fungus) protein is Siderophore transporter fer7.